The sequence spans 218 residues: Uracil-DNA glycosylase (218 aa).

Aspartate 60 functions as the Proton acceptor in the catalytic mechanism.

This sequence belongs to the uracil-DNA glycosylase (UDG) superfamily. UNG family.

It localises to the cytoplasm. It catalyses the reaction Hydrolyzes single-stranded DNA or mismatched double-stranded DNA and polynucleotides, releasing free uracil.. Its function is as follows. Excises uracil residues from the DNA which can arise as a result of misincorporation of dUMP residues by DNA polymerase or due to deamination of cytosine. The chain is Uracil-DNA glycosylase from Francisella philomiragia subsp. philomiragia (strain ATCC 25017 / CCUG 19701 / FSC 153 / O#319-036).